The chain runs to 438 residues: Dol-P-Man:Man(5)GlcNAc(2)-PP-Dol alpha-1,3-mannosyltransferase (438 aa).

The residue at position 13 (S13) is a Phosphoserine. 11 helical membrane-spanning segments follow: residues 41–61 (YTLL…FWVI), 95–115 (TGPL…YYAT), 123–143 (MAQN…FLIY), 149–169 (VPPF…SIFV), 172–192 (LFND…LLAQ), 203–223 (LAVS…FLLL), 231–251 (ALPK…PFLL), 289–309 (FHLA…LCRW), 332–352 (PLTP…GICF), 356–376 (LHYQ…WAMP), and 407–427 (AALH…PQPF).

It belongs to the glycosyltransferase ALG3 family.

It is found in the endoplasmic reticulum membrane. It catalyses the reaction an alpha-D-Man-(1-&gt;2)-alpha-D-Man-(1-&gt;2)-alpha-D-Man-(1-&gt;3)-[alpha-D-Man-(1-&gt;6)]-beta-D-Man-(1-&gt;4)-beta-D-GlcNAc-(1-&gt;4)-alpha-D-GlcNAc-diphospho-di-trans,poly-cis-dolichol + a di-trans,poly-cis-dolichyl beta-D-mannosyl phosphate = an alpha-D-Man-(1-&gt;2)-alpha-D-Man-(1-&gt;2)-alpha-D-Man-(1-&gt;3)-[alpha-D-Man-(1-&gt;3)-alpha-D-Man-(1-&gt;6)]-beta-D-Man-(1-&gt;4)-beta-D-GlcNAc-(1-&gt;4)-alpha-D-GlcNAc-diphospho-di-trans,poly-cis-dolichol + a di-trans,poly-cis-dolichyl phosphate + H(+). It participates in protein modification; protein glycosylation. Functionally, dol-P-Man:Man(5)GlcNAc(2)-PP-Dol alpha-1,3-mannosyltransferase that operates in the biosynthetic pathway of dolichol-linked oligosaccharides, the glycan precursors employed in protein asparagine (N)-glycosylation. The assembly of dolichol-linked oligosaccharides begins on the cytosolic side of the endoplasmic reticulum membrane and finishes in its lumen. The sequential addition of sugars to dolichol pyrophosphate produces dolichol-linked oligosaccharides containing fourteen sugars, including two GlcNAcs, nine mannoses and three glucoses. Once assembled, the oligosaccharide is transferred from the lipid to nascent proteins by oligosaccharyltransferases. In the lumen of the endoplasmic reticulum, adds the first dolichyl beta-D-mannosyl phosphate derived mannose in an alpha-1,3 linkage to Man(5)GlcNAc(2)-PP-dolichol to produce Man(6)GlcNAc(2)-PP-dolichol. Man(6)GlcNAc(2)-PP-dolichol is a substrate for ALG9, the following enzyme in the biosynthetic pathway. In Homo sapiens (Human), this protein is Dol-P-Man:Man(5)GlcNAc(2)-PP-Dol alpha-1,3-mannosyltransferase.